The following is a 647-amino-acid chain: DNA mismatch repair protein MutL (647 aa).

The protein belongs to the DNA mismatch repair MutL/HexB family.

Its function is as follows. This protein is involved in the repair of mismatches in DNA. It is required for dam-dependent methyl-directed DNA mismatch repair. May act as a 'molecular matchmaker', a protein that promotes the formation of a stable complex between two or more DNA-binding proteins in an ATP-dependent manner without itself being part of a final effector complex. The chain is DNA mismatch repair protein MutL from Bacillus cereus (strain ATCC 10987 / NRS 248).